Consider the following 132-residue polypeptide: Small ribosomal subunit protein uS8 (132 aa).

It belongs to the universal ribosomal protein uS8 family. Part of the 30S ribosomal subunit. Contacts proteins S5 and S12.

Its function is as follows. One of the primary rRNA binding proteins, it binds directly to 16S rRNA central domain where it helps coordinate assembly of the platform of the 30S subunit. This is Small ribosomal subunit protein uS8 from Rhodopseudomonas palustris (strain HaA2).